A 117-amino-acid chain; its full sequence is Reprimo-like protein (117 aa).

A helical membrane pass occupies residues 64-84 (VAQIAVLCVLSLTVVFGVFFL). S106 bears the Phosphoserine mark.

Belongs to the reprimo family.

It localises to the membrane. In Mus musculus (Mouse), this protein is Reprimo-like protein (Rprml).